We begin with the raw amino-acid sequence, 140 residues long: Putative pre-16S rRNA nuclease (140 aa).

The protein belongs to the YqgF nuclease family.

It is found in the cytoplasm. Its function is as follows. Could be a nuclease involved in processing of the 5'-end of pre-16S rRNA. The chain is Putative pre-16S rRNA nuclease from Halothermothrix orenii (strain H 168 / OCM 544 / DSM 9562).